A 121-amino-acid polypeptide reads, in one-letter code: Putative ankyrin repeat protein L215 (121 aa).

2 ANK repeats span residues 10–40 and 42–71; these read QYDS…SFKE and IHET…NKLV.

The protein is Putative ankyrin repeat protein L215 of Acanthamoeba polyphaga mimivirus (APMV).